The chain runs to 256 residues: tRNA-cytidine(32) 2-sulfurtransferase (256 aa).

A PP-loop motif motif is present at residues 35 to 40; that stretch reads SGGKDS. The [4Fe-4S] cluster site is built by cysteine 110, cysteine 113, and cysteine 201.

It belongs to the TtcA family. As to quaternary structure, homodimer. Mg(2+) is required as a cofactor. [4Fe-4S] cluster serves as cofactor.

The protein resides in the cytoplasm. It carries out the reaction cytidine(32) in tRNA + S-sulfanyl-L-cysteinyl-[cysteine desulfurase] + AH2 + ATP = 2-thiocytidine(32) in tRNA + L-cysteinyl-[cysteine desulfurase] + A + AMP + diphosphate + H(+). It participates in tRNA modification. Functionally, catalyzes the ATP-dependent 2-thiolation of cytidine in position 32 of tRNA, to form 2-thiocytidine (s(2)C32). The sulfur atoms are provided by the cysteine/cysteine desulfurase (IscS) system. The protein is tRNA-cytidine(32) 2-sulfurtransferase of Coxiella burnetii (strain RSA 493 / Nine Mile phase I).